Reading from the N-terminus, the 852-residue chain is Alanine--tRNA ligase (852 aa).

Positions 554, 558, 656, and 660 each coordinate Zn(2+).

This sequence belongs to the class-II aminoacyl-tRNA synthetase family. Zn(2+) serves as cofactor.

Its subcellular location is the cytoplasm. It carries out the reaction tRNA(Ala) + L-alanine + ATP = L-alanyl-tRNA(Ala) + AMP + diphosphate. In terms of biological role, catalyzes the attachment of alanine to tRNA(Ala) in a two-step reaction: alanine is first activated by ATP to form Ala-AMP and then transferred to the acceptor end of tRNA(Ala). Also edits incorrectly charged Ser-tRNA(Ala) and Gly-tRNA(Ala) via its editing domain. In Campylobacter concisus (strain 13826), this protein is Alanine--tRNA ligase.